Consider the following 289-residue polypeptide: Putative 2-aminoethylphosphonate transport system permease protein PhnU (289 aa).

6 consecutive transmembrane segments (helical) span residues 19 to 39, 76 to 96, 111 to 131, 150 to 170, 202 to 222, and 254 to 274; these read WLLLPLLALATLFFWPLSLIV, FFATAGCLLLGSVMSLILVFI, FIALPTFLITLAFTFIYGSAG, FLYSMQGVILAEITVFTPLVM, VIFPAALPALMASGSLCLLLT, and YTVACMIALINIVLSLGLFSL. Residues 68–275 form the ABC transmembrane type-1 domain; it reads LLNTLQIAFF…VLSLGLFSLY (208 aa).

Belongs to the binding-protein-dependent transport system permease family.

The protein localises to the cell inner membrane. Functionally, probably part of the PhnSTUV complex (TC 3.A.1.11.5) involved in 2-aminoethylphosphonate import. Probably responsible for the translocation of the substrate across the membrane. The sequence is that of Putative 2-aminoethylphosphonate transport system permease protein PhnU (phnU) from Salmonella typhi.